A 131-amino-acid chain; its full sequence is Small ribosomal subunit protein bS6 (131 aa).

The interval 97–131 (TEASPMAKARDERDSRRGPAGERSYDEAHAEEIAE) is disordered. A compositionally biased stretch (basic and acidic residues) spans 104–131 (KARDERDSRRGPAGERSYDEAHAEEIAE).

It belongs to the bacterial ribosomal protein bS6 family.

Functionally, binds together with bS18 to 16S ribosomal RNA. The sequence is that of Small ribosomal subunit protein bS6 from Shewanella baltica (strain OS223).